A 145-amino-acid chain; its full sequence is Hemoglobin fetal subunit beta (145 aa).

One can recognise a Globin domain in the interval 1 to 145 (MLSAEEKASV…VANALAHRYH (145 aa)). Positions 62 and 91 each coordinate heme b.

This sequence belongs to the globin family. Heterotetramer of two alpha chains and two beta chains. Red blood cells.

In terms of biological role, involved in oxygen transport from the lung to the various peripheral tissues. The sequence is that of Hemoglobin fetal subunit beta from Capra hircus (Goat).